The following is a 170-amino-acid chain: MKTQRDGPSLGRWSLLLLLLGLTMPLAVIGRVLSYQEAVLRAVDGLNQRSSDANLYRLLNLDPRPTMDGDPDTPKPVSFTVKETVCPRTIQRSPEECDFKEDGLVKWCVGTVTLNQAKDSFDISCDKDKRKVARLGGILRKAGEKIGGGLKKIGQKIKDFFGKLAPRTES.

An N-terminal signal peptide occupies residues 1–30; sequence MKTQRDGPSLGRWSLLLLLLGLTMPLAVIG. Residues 31–131 constitute a propeptide, cathelin-like domain (CLD); that stretch reads RVLSYQEAVL…DISCDKDKRK (101 aa). The segment at 31 to 131 is cathelin-like domain (CLD); sequence RVLSYQEAVL…DISCDKDKRK (101 aa). Intrachain disulfides connect cysteine 86/cysteine 97 and cysteine 108/cysteine 125. An active core region spans residues 150-162; the sequence is LKKIGQKIKDFFG.

The protein belongs to the cathelicidin family. In terms of assembly, monomer, homodimer or homotrimer (in vitro). Oligomerizes as tetra- or hexamer in solution (in vitro). Proteolytically cleaved by proteinase PRTN3 into antibacterial peptide LL-37. Proteolytically cleaved by cathepsin CTSG and neutrophil elastase ELANE. Post-translationally, resistant to proteolytic degradation in solution, and when bound to both zwitterionic (mimicking mammalian membranes) and negatively charged membranes (mimicking bacterial membranes). In terms of processing, after secretion onto the skin surface, the CAMP gene product is processed by a serine protease-dependent mechanism into multiple novel antimicrobial peptides distinct from and shorter than cathelicidin LL-37. These peptides show enhanced antimicrobial action, acquiring the ability to kill skin pathogens such as S.aureus, E.coli and C.albicans. These peptides have lost the ability to stimulate CXCL8/IL8 release from keratinocytes. The peptides act synergistically, killing bacteria at lower concentrations when present together, and maintain activity at increased salt condition.

Its subcellular location is the secreted. It localises to the vesicle. Its function is as follows. Antimicrobial protein that is an integral component of the innate immune system. Binds to bacterial lipopolysaccharides (LPS). Acts via neutrophil N-formyl peptide receptors to enhance the release of CXCL2. Postsecretory processing generates multiple cathelicidin antimicrobial peptides with various lengths which act as a topical antimicrobial defense in sweat on skin. The unprocessed precursor form, cathelicidin antimicrobial peptide, inhibits the growth of Gram-negative E.coli and E.aerogenes with efficiencies comparable to that of the mature peptide LL-37 (in vitro). Antimicrobial peptide that is an integral component of the innate immune system. Binds to bacterial lipopolysaccharides (LPS). Causes membrane permeabilization by forming transmembrane pores (in vitro). Causes lysis of E.coli. Exhibits antimicrobial activity against Gram-negative bacteria such as P.aeruginosa, S.typhimurium, E.aerogenes, E.coli and P.syringae, Gram-positive bacteria such as L.monocytogenes, S.epidermidis, S.pyogenes and S.aureus, as well as vancomycin-resistant enterococci (in vitro). Exhibits antimicrobial activity against methicillin-resistant S.aureus, P.mirabilis, and C.albicans in low-salt media, but not in media containing 100 mM NaCl (in vitro). Forms chiral supramolecular assemblies with quinolone signal (PQS) molecules of P.aeruginosa, which may lead to interference of bacterial quorum signaling and perturbance of bacterial biofilm formation. May form supramolecular fiber-like assemblies on bacterial membranes. Induces cytokine and chemokine producation as well as TNF/TNFA and CSF2/GMCSF production in normal human keratinocytes. Exhibits hemolytic activity against red blood cells. In terms of biological role, exhibits antimicrobial activity against E.coli and B.megaterium (in vitro). In Saguinus oedipus (Cotton-top tamarin), this protein is Cathelicidin antimicrobial peptide.